The primary structure comprises 362 residues: Large ribosomal subunit protein uL3 (362 aa).

The disordered stretch occupies residues 340 to 362 (RPPKKKPPVQRPQITYVSVESKQ). The span at 351–362 (PQITYVSVESKQ) shows a compositional bias: polar residues.

Belongs to the universal ribosomal protein uL3 family. As to quaternary structure, part of the 50S ribosomal subunit. Forms a cluster with proteins L14 and L24e.

Its function is as follows. One of the primary rRNA binding proteins, it binds directly near the 3'-end of the 23S rRNA, where it nucleates assembly of the 50S subunit. In Pyrococcus horikoshii (strain ATCC 700860 / DSM 12428 / JCM 9974 / NBRC 100139 / OT-3), this protein is Large ribosomal subunit protein uL3.